The following is a 460-amino-acid chain: MPKLAYKSVSQISGPLLFVENVPNAAYNEMVDIELENGETRQGQVLDTRKGLAIVQIFGATTGIGTQGTTVKFRGETARLPISEDMLGRVFNGIGEPIDGGPEIIAKERMEITSNAINPYSREEPSEFIETGISAIDGMNTLVRGQKLPIFSGSGLPHNQLAAQIARQAKVLDSSENFAVVFGAMGITSEEANYFTNQFRETGALSRSVMFLNLSSDPSMERIILPRIALTTAEYLAFQKGMHILVILTDMTNYCEALREISAAREEVPGRRGYPGYMYTDLSTIYERAGKLKGNNGSITQIPILTMPGDDITHPVPDLTGYITEGQIVISRDLNRKDMYPGIDVLLSLSRLMNQGIGKGRTREDHRGLADQLYAAYASGKDLRSLTAIVGEEALSQNDRKYLHFADTFESRYIKQGFFEDRSIEDTLGLGWDLLADLPVQDMKRVKPDHIQKYGRWKKE.

Belongs to the ATPase alpha/beta chains family. Has multiple subunits with at least A(3), B(3), C, D, E, F, H, I and proteolipid K(x).

It is found in the cell membrane. In terms of biological role, component of the A-type ATP synthase that produces ATP from ADP in the presence of a proton gradient across the membrane. The B chain is a regulatory subunit. The sequence is that of A-type ATP synthase subunit B from Thermoplasma acidophilum (strain ATCC 25905 / DSM 1728 / JCM 9062 / NBRC 15155 / AMRC-C165).